Here is a 362-residue protein sequence, read N- to C-terminus: Dihydroorotate dehydrogenase (quinone) (362 aa).

Residues 62 to 66 (AGYDK) and T86 each bind FMN. K66 provides a ligand contact to substrate. Residue 111–115 (NRLGF) participates in substrate binding. FMN is bound by residues N139 and N170. Residue N170 participates in substrate binding. The active-site Nucleophile is S173. Position 175 (N175) interacts with substrate. FMN contacts are provided by K215 and S243. Residue 244–245 (NT) participates in substrate binding. FMN contacts are provided by residues G266, G295, and 316 to 317 (YS).

It belongs to the dihydroorotate dehydrogenase family. Type 2 subfamily. In terms of assembly, monomer. FMN is required as a cofactor.

It is found in the cell membrane. It carries out the reaction (S)-dihydroorotate + a quinone = orotate + a quinol. Its pathway is pyrimidine metabolism; UMP biosynthesis via de novo pathway; orotate from (S)-dihydroorotate (quinone route): step 1/1. Its function is as follows. Catalyzes the conversion of dihydroorotate to orotate with quinone as electron acceptor. This chain is Dihydroorotate dehydrogenase (quinone), found in Rhizobium meliloti (strain 1021) (Ensifer meliloti).